The primary structure comprises 440 residues: R3H and coiled-coil domain-containing protein 1 (440 aa).

The 66-residue stretch at 16-81 folds into the R3H domain; that stretch reads NDFVHRIQEE…KRRTVICHQD (66 aa). The segment at 154–225 is disordered; it reads TSVLKREAPA…LGPESQSGKG (72 aa). The span at 157 to 168 shows a compositional bias: basic and acidic residues; that stretch reads LKREAPAGRDPE. Position 236 is a phosphoserine (Ser236). Residues 242-300 are a coiled coil; sequence LEKGKESLLEKRLVAEEEEDEEEVEEDGPSSCSEDDYSELLQEITDNLTKKEIQIEKIH. Residues 254–276 form a disordered region; the sequence is LVAEEEEDEEEVEEDGPSSCSED. A compositionally biased stretch (acidic residues) spans 257–276; sequence EEEEDEEEVEEDGPSSCSED.

In Homo sapiens (Human), this protein is R3H and coiled-coil domain-containing protein 1.